The primary structure comprises 243 residues: UPF0758 protein alr2351 (243 aa).

One can recognise an MPN domain in the interval 113–235 (PIDSPVAAVA…HQSLREITTL (123 aa)). H184, H186, and D197 together coordinate Zn(2+). Positions 184-197 (HNHPSGNVEPSPED) match the JAMM motif motif.

Belongs to the UPF0758 family.

The protein is UPF0758 protein alr2351 of Nostoc sp. (strain PCC 7120 / SAG 25.82 / UTEX 2576).